A 421-amino-acid chain; its full sequence is MQDQLDHELERIDKLPKLGLLWVEYSAYALGVNIAPRKRSSKYCRLTRILVLIVNLSIIYSLVAFIMENYMISFETYVEAVLLTFQLSVGVVKMFHFQNKVESCSQLVFSTETGEVLKSLGLFQLDLPRKKELLSSVSLILLNNWMIIDRQVMFFFKIVCMPVLYYCVRPYFQYIFDCYIKDKDTCEMTLTYPAIVPYLQLGNYEFPSYVIRFFLLQSGPLWCFFAVFGFNSLFVVLTRYESGLIKVLRFLVQNSTSDILVPKDQRVKYLQCCVRLFARISSHHNQIENLFKYIILVQCSVSSILICMLLYKISTVLEVGWVWMGMIMVYFVTIALEITLYNVSAQKVESQSELLFHDWYNCSWYNESREFKFMIKMMLLFSRRTFVLSVGGFTSLSHKFLVQVFRLSANFFLLLRNMNNK.

Residues 1 to 48 (MQDQLDHELERIDKLPKLGLLWVEYSAYALGVNIAPRKRSSKYCRLTR) lie on the Cytoplasmic side of the membrane. A helical transmembrane segment spans residues 49–69 (ILVLIVNLSIIYSLVAFIMEN). Residues 70 to 71 (YM) are Extracellular-facing. The chain crosses the membrane as a helical span at residues 72 to 92 (ISFETYVEAVLLTFQLSVGVV). The Cytoplasmic segment spans residues 93-151 (KMFHFQNKVESCSQLVFSTETGEVLKSLGLFQLDLPRKKELLSSVSLILLNNWMIIDRQ). A helical membrane pass occupies residues 152–172 (VMFFFKIVCMPVLYYCVRPYF). Residues 173–217 (QYIFDCYIKDKDTCEMTLTYPAIVPYLQLGNYEFPSYVIRFFLLQ) are Extracellular-facing. Residues 218-238 (SGPLWCFFAVFGFNSLFVVLT) form a helical membrane-spanning segment. Residues 239-289 (RYESGLIKVLRFLVQNSTSDILVPKDQRVKYLQCCVRLFARISSHHNQIEN) lie on the Cytoplasmic side of the membrane. The chain crosses the membrane as a helical span at residues 290 to 310 (LFKYIILVQCSVSSILICMLL). Residues 311-315 (YKIST) lie on the Extracellular side of the membrane. Residues 316-336 (VLEVGWVWMGMIMVYFVTIAL) traverse the membrane as a helical segment. Residues 337 to 384 (EITLYNVSAQKVESQSELLFHDWYNCSWYNESREFKFMIKMMLLFSRR) are Cytoplasmic-facing. The chain crosses the membrane as a helical span at residues 385–405 (TFVLSVGGFTSLSHKFLVQVF). Topologically, residues 406 to 421 (RLSANFFLLLRNMNNK) are extracellular.

This sequence belongs to the insect chemoreceptor superfamily. Heteromeric odorant receptor channel (TC 1.A.69) family. Or63a subfamily. As to quaternary structure, interacts with Orco. Complexes exist early in the endomembrane system in olfactory sensory neurons (OSNs), coupling these complexes to the conserved ciliary trafficking pathway.

Its subcellular location is the cell membrane. Odorant receptor which mediates acceptance or avoidance behavior, depending on its substrates. The odorant receptor repertoire encodes a large collection of odor stimuli that vary widely in identity, intensity, and duration. May form a complex with Orco to form odorant-sensing units, providing sensitive and prolonged odorant signaling and calcium permeability. Involved in the behavioral responses to ethyl acetate, pentyl acetate, methyl caproate, anisole, heptanal, 2-heptanone, r-carvone, nonanoic acid, and pyrazines. The sequence is that of Odorant receptor 67b (Or67b) from Drosophila melanogaster (Fruit fly).